A 125-amino-acid chain; its full sequence is Holo-[acyl-carrier-protein] synthase (125 aa).

The Mg(2+) site is built by D8 and E57.

This sequence belongs to the P-Pant transferase superfamily. AcpS family. It depends on Mg(2+) as a cofactor.

Its subcellular location is the cytoplasm. The enzyme catalyses apo-[ACP] + CoA = holo-[ACP] + adenosine 3',5'-bisphosphate + H(+). Its function is as follows. Transfers the 4'-phosphopantetheine moiety from coenzyme A to a Ser of acyl-carrier-protein. The protein is Holo-[acyl-carrier-protein] synthase of Nitrosomonas eutropha (strain DSM 101675 / C91 / Nm57).